A 192-amino-acid chain; its full sequence is Glycerol-3-phosphate acyltransferase (192 aa).

Transmembrane regions (helical) follow at residues 4 to 24, 48 to 68, 74 to 94, 101 to 121, and 125 to 145; these read FAIIYMLFTYLLGSISSDVVI, LVLVVFLCDVLKGMLPVWVGY, YFELGMVALAACLGHIFPIFF, GVATAFGAIAPIAWGVAGSML, and LLIFLFSGYVALSTVVTALIL.

It belongs to the PlsY family. In terms of assembly, probably interacts with PlsX.

It is found in the cell inner membrane. The enzyme catalyses an acyl phosphate + sn-glycerol 3-phosphate = a 1-acyl-sn-glycero-3-phosphate + phosphate. It participates in lipid metabolism; phospholipid metabolism. In terms of biological role, catalyzes the transfer of an acyl group from acyl-phosphate (acyl-PO(4)) to glycerol-3-phosphate (G3P) to form lysophosphatidic acid (LPA). This enzyme utilizes acyl-phosphate as fatty acyl donor, but not acyl-CoA or acyl-ACP. The chain is Glycerol-3-phosphate acyltransferase from Histophilus somni (strain 129Pt) (Haemophilus somnus).